The chain runs to 248 residues: Small ribosomal subunit protein eS6 (248 aa).

The disordered stretch occupies residues 213–248; sequence LLAQRKKESKAKREEAKRRRSASMRESKSSISSDKK. Residues 223-248 show a composition bias toward basic and acidic residues; sequence AKREEAKRRRSASMRESKSSISSDKK.

It belongs to the eukaryotic ribosomal protein eS6 family. Component of the small ribosomal subunit. Part of the small subunit (SSU) processome, composed of more than 70 proteins and the RNA chaperone small nucleolar RNA (snoRNA) U3. In terms of processing, ribosomal protein S6 is the major substrate of protein kinases in eukaryote ribosomes.

The protein resides in the cytoplasm. The protein localises to the nucleus. It is found in the nucleolus. Functionally, component of the 40S small ribosomal subunit. Plays an important role in controlling cell growth and proliferation through the selective translation of particular classes of mRNA. Part of the small subunit (SSU) processome, first precursor of the small eukaryotic ribosomal subunit. During the assembly of the SSU processome in the nucleolus, many ribosome biogenesis factors, an RNA chaperone and ribosomal proteins associate with the nascent pre-rRNA and work in concert to generate RNA folding, modifications, rearrangements and cleavage as well as targeted degradation of pre-ribosomal RNA by the RNA exosome. This is Small ribosomal subunit protein eS6 (RpS6) from Glossina morsitans morsitans (Savannah tsetse fly).